A 78-amino-acid chain; its full sequence is Calcium/calmodulin-dependent protein kinase II inhibitor 1 (78 aa).

The CAMK2 inhibitory domain stretch occupies residues 41 to 68 (NKRPPKLGQIGRSKRVVIEDDRIDDVLK).

It belongs to the CAMK2N family. As to quaternary structure, interacts with CAMK2B; the presence of Ca(2+)/calmodulin increases the interaction but is not essential. Interacts with CAMK2A; this interaction requires CAMK2A activation by Ca(2+).

It is found in the synapse. It localises to the cell projection. The protein resides in the dendrite. The protein localises to the postsynaptic density. Potent and specific inhibitor of CaM-kinase II (CAMK2). Plays a role in the maintenance of long-term retrieval-induced memory in response to contextual fear. Modulates blood pressure and vascular reactivity via regulation of CAMK2 activity in addition to regulation of left ventricular mass. Mediates the NLRP3 inflammasome in cardiomyocytes via acting as an inhibitor of the MAPK14/p38 and MAPK8/JNK pathways, thereby regulating ventricular remodeling and cardiac rhythm post-myocardial infarction. Negatively effects insulin sensitivity and promotes lipid formation in adipose tissues independent of CAMK2 signaling. This is Calcium/calmodulin-dependent protein kinase II inhibitor 1 (CAMK2N1) from Homo sapiens (Human).